A 1210-amino-acid chain; its full sequence is uncharacterized protein (1210 aa).

This sequence to E.coli molybdate metabolism regulator (MolR).

This is an uncharacterized protein from Escherichia coli (strain K12).